Consider the following 1833-residue polypeptide: Protein TIC 214 (1833 aa).

6 helical membrane passes run 18 to 38, 67 to 87, 90 to 110, 127 to 147, 175 to 195, and 218 to 238; these read IINS…FSIG, FIMG…HLAL, PHTI…WNNH, LSIQ…YFIL, VGWL…LVWI, and IFSI…PSPI. The disordered stretch occupies residues 254–301; sequence EETNLEIEKTSETKETKQEEEGFTEEDPSPSLFSEEKEDPDKIDETEK. 2 stretches are compositionally biased toward basic and acidic residues: residues 259–273 and 292–301; these read EIEK…KQEE and DPDKIDETEK.

It belongs to the TIC214 family. Part of the Tic complex.

The protein localises to the plastid. It is found in the chloroplast inner membrane. Its function is as follows. Involved in protein precursor import into chloroplasts. May be part of an intermediate translocation complex acting as a protein-conducting channel at the inner envelope. The protein is Protein TIC 214 of Spinacia oleracea (Spinach).